Consider the following 302-residue polypeptide: 4-hydroxy-tetrahydrodipicolinate synthase (302 aa).

Residue T57 coordinates pyruvate. The active-site Proton donor/acceptor is Y145. K173 acts as the Schiff-base intermediate with substrate in catalysis. I213 is a pyruvate binding site.

Belongs to the DapA family. As to quaternary structure, homotetramer; dimer of dimers.

Its subcellular location is the cytoplasm. The catalysed reaction is L-aspartate 4-semialdehyde + pyruvate = (2S,4S)-4-hydroxy-2,3,4,5-tetrahydrodipicolinate + H2O + H(+). It functions in the pathway amino-acid biosynthesis; L-lysine biosynthesis via DAP pathway; (S)-tetrahydrodipicolinate from L-aspartate: step 3/4. Catalyzes the condensation of (S)-aspartate-beta-semialdehyde [(S)-ASA] and pyruvate to 4-hydroxy-tetrahydrodipicolinate (HTPA). This is 4-hydroxy-tetrahydrodipicolinate synthase from Corynebacterium aurimucosum (strain ATCC 700975 / DSM 44827 / CIP 107346 / CN-1) (Corynebacterium nigricans).